The primary structure comprises 366 residues: Methylthioribose-1-phosphate isomerase (366 aa).

Substrate-binding positions include 53–55 (RGA), arginine 90, and glutamine 203. Aspartate 244 functions as the Proton donor in the catalytic mechanism. 254 to 255 (NK) is a binding site for substrate.

This sequence belongs to the eIF-2B alpha/beta/delta subunits family. MtnA subfamily.

The enzyme catalyses 5-(methylsulfanyl)-alpha-D-ribose 1-phosphate = 5-(methylsulfanyl)-D-ribulose 1-phosphate. It participates in amino-acid biosynthesis; L-methionine biosynthesis via salvage pathway; L-methionine from S-methyl-5-thio-alpha-D-ribose 1-phosphate: step 1/6. In terms of biological role, catalyzes the interconversion of methylthioribose-1-phosphate (MTR-1-P) into methylthioribulose-1-phosphate (MTRu-1-P). The sequence is that of Methylthioribose-1-phosphate isomerase from Methylocella silvestris (strain DSM 15510 / CIP 108128 / LMG 27833 / NCIMB 13906 / BL2).